Here is a 169-residue protein sequence, read N- to C-terminus: Vimentin-type intermediate filament-associated coiled-coil protein (169 aa).

Residues Leu-7–Gln-89 adopt a coiled-coil conformation. Positions Arg-126–Pro-135 are enriched in low complexity. Residues Arg-126–Val-169 form a disordered region. Pro residues predominate over residues Gly-136–Pro-146.

It localises to the cytoplasm. The polypeptide is Vimentin-type intermediate filament-associated coiled-coil protein (VMAC) (Homo sapiens (Human)).